We begin with the raw amino-acid sequence, 144 residues long: Peptide methionine sulfoxide reductase MsrB (144 aa).

In terms of domain architecture, MsrB spans 6 to 128 (KDELKKKLTP…NSAALRFIPK (123 aa)). Catalysis depends on Cys-117, which acts as the Nucleophile.

Belongs to the MsrB Met sulfoxide reductase family.

The enzyme catalyses L-methionyl-[protein] + [thioredoxin]-disulfide + H2O = L-methionyl-(R)-S-oxide-[protein] + [thioredoxin]-dithiol. This is Peptide methionine sulfoxide reductase MsrB from Shouchella clausii (strain KSM-K16) (Alkalihalobacillus clausii).